A 263-amino-acid chain; its full sequence is Thiazole synthase (263 aa).

The active-site Schiff-base intermediate with DXP is Lys100. Residues Gly161, 188 to 189 (AG), and 210 to 211 (NS) each bind 1-deoxy-D-xylulose 5-phosphate.

It belongs to the ThiG family. As to quaternary structure, homotetramer. Forms heterodimers with either ThiH or ThiS.

Its subcellular location is the cytoplasm. The enzyme catalyses [ThiS sulfur-carrier protein]-C-terminal-Gly-aminoethanethioate + 2-iminoacetate + 1-deoxy-D-xylulose 5-phosphate = [ThiS sulfur-carrier protein]-C-terminal Gly-Gly + 2-[(2R,5Z)-2-carboxy-4-methylthiazol-5(2H)-ylidene]ethyl phosphate + 2 H2O + H(+). The protein operates within cofactor biosynthesis; thiamine diphosphate biosynthesis. Its function is as follows. Catalyzes the rearrangement of 1-deoxy-D-xylulose 5-phosphate (DXP) to produce the thiazole phosphate moiety of thiamine. Sulfur is provided by the thiocarboxylate moiety of the carrier protein ThiS. In vitro, sulfur can be provided by H(2)S. The polypeptide is Thiazole synthase (Pseudoalteromonas translucida (strain TAC 125)).